A 494-amino-acid chain; its full sequence is MSILIILIISIIFYLIFDFLYKNFSNRQFKGPLALPLVGSLLHLKDDTHLVFQNDSKLYKDGDNNGKIIKYWFCDQLTLAIYDTNTMKEIYLKNPESLNTRVKSPSTNVIGNRFRGIVTADENYWQFHRDILMKSFTGRKVKSLSSSIEKETIDLITYMKFIEKSGQSFSPRSNFMNFYSNIIFDYVFSRRIENIYEGVNEEQGKVLLAIRELFDYLADTLIVNYLIFTKPFYFLYLKMFGHPADSLKKILTKYYLEHSESIDLNNARDVLDSLIIEYRKVGGKEEQSSIIPMVNELILAGTETNSSTAEWFILTMVNNLDYQDKIYNELKSTLETTTAMIKLSNRNQTPLFNAALKEVLRLYPPVPFGVPRQVNQSFEINGGSLKIPKGTQIIQSLYSIFRDENYWDSPDQFKPERFLDQDSHSNNYFPYGIGVKNCIGMGFSQDELYISLSNLVLNFKLLPLIENSKICDKPIFGFSFKPNEFKINLEKRNN.

Residues 1-21 (MSILIILIISIIFYLIFDFLY) traverse the membrane as a helical segment. Cys438 is a heme binding site.

This sequence belongs to the cytochrome P450 family. Requires heme as cofactor.

The protein resides in the membrane. The polypeptide is Probable cytochrome P450 518A1 (cyp518A1) (Dictyostelium discoideum (Social amoeba)).